Consider the following 110-residue polypeptide: UPF0122 protein gbs1018 (110 aa).

It belongs to the UPF0122 family.

Its function is as follows. Might take part in the signal recognition particle (SRP) pathway. This is inferred from the conservation of its genetic proximity to ftsY/ffh. May be a regulatory protein. In Streptococcus agalactiae serotype III (strain NEM316), this protein is UPF0122 protein gbs1018.